The sequence spans 324 residues: Acetyl-coenzyme A carboxylase carboxyl transferase subunit alpha (324 aa).

Residues 37 to 291 (KLERRLDKLK…QNFILQEWLR (255 aa)) form the CoA carboxyltransferase C-terminal domain.

The protein belongs to the AccA family. Acetyl-CoA carboxylase is a heterohexamer composed of biotin carboxyl carrier protein (AccB), biotin carboxylase (AccC) and two subunits each of ACCase subunit alpha (AccA) and ACCase subunit beta (AccD).

The protein localises to the cytoplasm. It catalyses the reaction N(6)-carboxybiotinyl-L-lysyl-[protein] + acetyl-CoA = N(6)-biotinyl-L-lysyl-[protein] + malonyl-CoA. It participates in lipid metabolism; malonyl-CoA biosynthesis; malonyl-CoA from acetyl-CoA: step 1/1. Its function is as follows. Component of the acetyl coenzyme A carboxylase (ACC) complex. First, biotin carboxylase catalyzes the carboxylation of biotin on its carrier protein (BCCP) and then the CO(2) group is transferred by the carboxyltransferase to acetyl-CoA to form malonyl-CoA. The polypeptide is Acetyl-coenzyme A carboxylase carboxyl transferase subunit alpha (Chlamydia caviae (strain ATCC VR-813 / DSM 19441 / 03DC25 / GPIC) (Chlamydophila caviae)).